The chain runs to 530 residues: DNA damage-binding protein cmr1 (530 aa).

Disordered regions lie at residues 34–115 (VGLF…RKSD) and 224–250 (TKPV…LTTL). Positions 52-62 (AKKKKPAPKKV) are enriched in basic residues. Over residues 89-108 (EVAKRKADEHDAALQEAERA) the composition is skewed to basic and acidic residues. The stretch at 188–229 (LTPERIYAMTFHPSESKPLIFAGDKMGHLGVLDASQTKPVSA) is one WD 1 repeat. Over residues 233-244 (DEDEEDDDDDPD) the composition is skewed to acidic residues. WD repeat units follow at residues 252-292 (PHTR…SVER), 302-339 (VPIS…QDSA), 344-384 (LSDK…HKSP), 389-430 (EHES…ASWK), 453-496 (GRWV…LAQL), and 499-530 (DGIT…CLWM).

This sequence belongs to the WD repeat DDB2/WDR76 family.

Functionally, DNA-binding protein that binds to both single- and double-stranded DNA. Binds preferentially to UV-damaged DNA. May be involved in DNA-metabolic processes. This is DNA damage-binding protein cmr1 from Aspergillus terreus (strain NIH 2624 / FGSC A1156).